A 423-amino-acid chain; its full sequence is tRNA(Ile)-lysidine synthase (423 aa).

29-34 (SGGKDS) is an ATP binding site.

Belongs to the tRNA(Ile)-lysidine synthase family.

The protein localises to the cytoplasm. The enzyme catalyses cytidine(34) in tRNA(Ile2) + L-lysine + ATP = lysidine(34) in tRNA(Ile2) + AMP + diphosphate + H(+). In terms of biological role, ligates lysine onto the cytidine present at position 34 of the AUA codon-specific tRNA(Ile) that contains the anticodon CAU, in an ATP-dependent manner. Cytidine is converted to lysidine, thus changing the amino acid specificity of the tRNA from methionine to isoleucine. The polypeptide is tRNA(Ile)-lysidine synthase (Lactococcus lactis subsp. lactis (strain IL1403) (Streptococcus lactis)).